Consider the following 390-residue polypeptide: Neuromedin-B receptor (390 aa).

Positions 1 to 20 are disordered; that stretch reads MPPRSLPNLSLPTEASESEL. The Extracellular portion of the chain corresponds to 1-41; it reads MPPRSLPNLSLPTEASESELEPEVWENDFLPDSDGTTAELV. A glycan (N-linked (GlcNAc...) asparagine) is linked at Asn8. The helical transmembrane segment at 42 to 65 threads the bilayer; it reads IRCVIPSLYLIIISVGLLGNIMLV. The Cytoplasmic portion of the chain corresponds to 66-79; sequence KIFLTNSTMRSVPN. The chain crosses the membrane as a helical span at residues 80–99; sequence IFISNLAAGDLLLLLTCVPV. Residues 100-117 lie on the Extracellular side of the membrane; sequence DASRYFFDEWVFGKLGCK. A disulfide bond links Cys116 and Cys198. Residues 118–139 traverse the membrane as a helical segment; the sequence is LIPAIQLTSVGVSVFTLTALSA. The Cytoplasmic portion of the chain corresponds to 140-156; that stretch reads DRYRAIVNPMDMQTSGV. Residues 157-177 traverse the membrane as a helical segment; sequence VLWTSLKAVGIWVVSVLLAVP. The Extracellular portion of the chain corresponds to 178–211; it reads EAVFSEVARIGSSDNSSFTACIPYPQTDELHPKI. The N-linked (GlcNAc...) asparagine glycan is linked to Asn192. Residues 212 to 235 form a helical membrane-spanning segment; that stretch reads HSVLIFLVYFLIPLVIISIYYYHI. The Cytoplasmic portion of the chain corresponds to 236-266; it reads AKTLIRSAHNLPGEYNEHTKKQMETRKRLAK. The helical transmembrane segment at 267–287 threads the bilayer; sequence IVLVFVGCFVFCWFPNHILYL. Over 288–299 the chain is Extracellular; it reads YRSFNYKEIDPS. The helical transmembrane segment at 300–327 threads the bilayer; it reads LGHMIVTLVARVLSFSNSCVNPFALYLL. Topologically, residues 328-390 are cytoplasmic; sequence SESFRKHFNS…GHSTKQEIAL (63 aa). Cys341 is lipidated: S-palmitoyl cysteine. The residue at position 352 (Ser352) is a Phosphoserine.

This sequence belongs to the G-protein coupled receptor 1 family. In terms of tissue distribution, brain (olfactory bulb and central thalamic regions), and esophagus.

The protein localises to the cell membrane. In terms of biological role, receptor for neuromedin-B. Contributes to the maintenance of basal sigh rate through signaling in the pre-Botzinger complex, a cluster of several thousand neurons in the ventrolateral medulla responsible for inspiration during respiratory activity. Contributes to the induction of sneezing following exposure to chemical irritants or allergens which causes release of NMB by nasal sensory neurons and activation of NMBR-expressing neurons in the sneeze-evoking region of the brainstem. These in turn activate neurons of the caudal ventral respiratory group, giving rise to the sneezing response. Contributes to induction of acute itch, possibly through its activation on dorsal root ganglion neurons by the NMB peptide. Plays a role in the innate immune response to influenza A virus infection by enhancing interferon alpha expression and reducing expression of IL6. Plays a role in CSF1-induced proliferation of osteoclast precursors by contributing to the positive regulation of the expression of the CSF1 receptor CSF1R. The chain is Neuromedin-B receptor (Nmbr) from Rattus norvegicus (Rat).